The primary structure comprises 233 residues: Ribonuclease 3 (233 aa).

The RNase III domain maps to 7–136 (KQYLLSEFNI…FIGALYLDQG (130 aa)). Residue E49 participates in Mg(2+) binding. D53 is a catalytic residue. D122 and E125 together coordinate Mg(2+). Residue E125 is part of the active site. The DRBM domain maps to 162-232 (DFKSRLQEKL…ARAALKLLEE (71 aa)).

Belongs to the ribonuclease III family. Homodimer. Requires Mg(2+) as cofactor.

It localises to the cytoplasm. It carries out the reaction Endonucleolytic cleavage to 5'-phosphomonoester.. In terms of biological role, digests double-stranded RNA. Involved in the processing of primary rRNA transcript to yield the immediate precursors to the large and small rRNAs (23S and 16S). Processes some mRNAs, and tRNAs when they are encoded in the rRNA operon. Processes pre-crRNA and tracrRNA of type II CRISPR loci if present in the organism. The protein is Ribonuclease 3 of Leuconostoc citreum (strain KM20).